A 402-amino-acid polypeptide reads, in one-letter code: MAAATASTQLIFSKPCSPSRLCPFQLCVFDTKQVLSSGRRRHVGGSGVRCMAVGEAATTGTKKRSGYELQTLTSWLLKQEQAGVIDAELTIVLSSISMACKQIASLVQRANISNLTGVQGAVNVQGEDQKKLDVVSNEVFSNCLRSSGRTGIIASEEEDVPVAVEESYSGNYIVVFDPLDGSSNIDAAASTGSNFWIYSPNDECLADIDDDPTLDTTEQRCIVNVCQPGSNLLAAGYCMYSSSIIFVLTLGNGVFVFTLDPMYGEFVLTQENLQIPRAGKIYAFNEGNYQLWDEKLKKYIDDLKDPGQSGKPYSARYIGSLVGDFHRTLLYGGIYGYPRDKKSKNGKLRLLYECAPINFIVEQAGGKGTDGLQVLRLQGTEIHQRVPLYIGEEVEKVEKYLA.

The transit peptide at 1 to 50 (MAAATASTQLIFSKPCSPSRLCPFQLCVFDTKQVLSSGRRRHVGGSGVRC) directs the protein to the chloroplast. E127, E156, D177, L179, and D180 together coordinate Mg(2+). Position 180–183 (180–183 (DGSS)) interacts with substrate. C221 and C226 are oxidised to a cystine. Residues N285, Y317, Y335, Y337, and K347 each contribute to the substrate site. E353 lines the Mg(2+) pocket.

Belongs to the FBPase class 1 family. Homotetramer. Mg(2+) serves as cofactor.

Its subcellular location is the plastid. The protein resides in the chloroplast. The enzyme catalyses beta-D-fructose 1,6-bisphosphate + H2O = beta-D-fructose 6-phosphate + phosphate. The protein operates within carbohydrate biosynthesis; Calvin cycle. The sequence is that of Fructose-1,6-bisphosphatase, chloroplastic (FBP) from Glycine max (Soybean).